The chain runs to 244 residues: Small ribosomal subunit protein uS3 (244 aa).

The region spanning 39–107 (VREMLRKKLA…PAHINVTEVR (69 aa)) is the KH type-2 domain. The tract at residues 213 to 244 (VGQEKQDDSPRNDRNDRGDRGDRPSRPAREAR) is disordered. A compositionally biased stretch (basic and acidic residues) spans 216 to 244 (EKQDDSPRNDRNDRGDRGDRPSRPAREAR).

The protein belongs to the universal ribosomal protein uS3 family. As to quaternary structure, part of the 30S ribosomal subunit. Forms a tight complex with proteins S10 and S14.

Its function is as follows. Binds the lower part of the 30S subunit head. Binds mRNA in the 70S ribosome, positioning it for translation. The chain is Small ribosomal subunit protein uS3 from Xanthomonas oryzae pv. oryzae (strain MAFF 311018).